The following is a 348-amino-acid chain: 4-hydroxy-2-oxovalerate aldolase 3 (348 aa).

One can recognise a Pyruvate carboxyltransferase domain in the interval 8 to 260 (ITVHDMTLRD…ETGVDVWKIQ (253 aa)). 16-17 (RD) lines the substrate pocket. D17 provides a ligand contact to Mn(2+). The active-site Proton acceptor is the H20. Residues S170 and H199 each contribute to the substrate site. Mn(2+) is bound by residues H199 and H201. Residue Y290 coordinates substrate.

It belongs to the 4-hydroxy-2-oxovalerate aldolase family.

The catalysed reaction is (S)-4-hydroxy-2-oxopentanoate = acetaldehyde + pyruvate. The chain is 4-hydroxy-2-oxovalerate aldolase 3 from Burkholderia lata (strain ATCC 17760 / DSM 23089 / LMG 22485 / NCIMB 9086 / R18194 / 383).